A 477-amino-acid polypeptide reads, in one-letter code: Homospermidine synthase (477 aa).

It belongs to the saccharopine dehydrogenase family. As to quaternary structure, homodimer. NAD(+) serves as cofactor.

The enzyme catalyses 2 putrescine = sym-homospermidine + NH4(+). It carries out the reaction putrescine + spermidine = sym-homospermidine + propane-1,3-diamine. Functionally, involved in the NAD(+)-dependent synthesis of the polyamine homospermidine from putrescine. The polypeptide is Homospermidine synthase (hss) (Blastochloris viridis (Rhodopseudomonas viridis)).